A 276-amino-acid polypeptide reads, in one-letter code: Nickel import system permease protein NikC (276 aa).

5 consecutive transmembrane segments (helical) span residues 10–30 (LIFF…FFVS), 73–93 (LFVT…LGLF), 108–128 (FIDV…ASFF), 186–206 (IIPA…LYIS), and 238–258 (IMLI…NLTG). Positions 69–258 (ARSTLFVTVL…ITILIFNLTG (190 aa)) constitute an ABC transmembrane type-1 domain.

Belongs to the binding-protein-dependent transport system permease family. OppBC subfamily. The complex is composed of two ATP-binding proteins (NikD and NikE), two transmembrane proteins (NikB and NikC) and a solute-binding protein (NikA).

The protein localises to the cell membrane. Part of the ABC transporter complex NikABCDE (Opp2) involved in nickel import. Probably responsible for the translocation of the substrate across the membrane. In Staphylococcus aureus (strain Mu50 / ATCC 700699), this protein is Nickel import system permease protein NikC.